Consider the following 51-residue polypeptide: Insulin (51 aa).

3 cysteine pairs are disulfide-bonded: Cys-7/Cys-37, Cys-19/Cys-50, and Cys-36/Cys-41.

This sequence belongs to the insulin family. Heterodimer of a B chain and an A chain linked by two disulfide bonds.

It localises to the secreted. Insulin decreases blood glucose concentration. It increases cell permeability to monosaccharides, amino acids and fatty acids. It accelerates glycolysis, the pentose phosphate cycle, and glycogen synthesis in liver. This is Insulin (INS) from Anser anser anser (Western greylag goose).